Consider the following 152-residue polypeptide: Inner membrane protein YbbJ (152 aa).

A helical transmembrane segment spans residues 1–21 (MMELMVVHPHIFWLSLGGLLL). Topologically, residues 22–31 (AAEMLGGNGY) are cytoplasmic. A helical membrane pass occupies residues 32–52 (LLWSGVAAVITGLVVWLVPLG). The Periplasmic segment spans residues 53–54 (WE). The chain crosses the membrane as a helical span at residues 55 to 75 (WQGVMFAILTLLAAWLWWKWL). Topologically, residues 76-152 (SRRVREQKHS…ITLHIRAVSS (77 aa)) are cytoplasmic.

This sequence to M.jannaschii MJ0826.

It is found in the cell inner membrane. The sequence is that of Inner membrane protein YbbJ (ybbJ) from Escherichia coli (strain K12).